The primary structure comprises 55 residues: Large ribosomal subunit protein bL33 (55 aa).

This sequence belongs to the bacterial ribosomal protein bL33 family.

This chain is Large ribosomal subunit protein bL33, found in Methylobacterium sp. (strain 4-46).